The chain runs to 318 residues: Nuclear egress protein 1 (318 aa).

The CCCH-type zinc finger occupies 129-239 (CLRLSPFGHS…HLLLQGTSLH (111 aa)).

Belongs to the herpesviridae NEC1 protein family. Forms a heterodimeric viral nuclear egress complex (NEC) with NEC2. Interacts with capsid vertex specific component 2/CVC2; this interaction directs the capsid to the host inner nuclear membrane to initiate budding. Post-translationally, phosphorylated at serine residues in the N-terminus. This phosphorylation regulates the localization within the inner nuclear membrane.

It is found in the host nucleus inner membrane. In terms of biological role, plays an essential role in virion nuclear egress, the first step of virion release from infected cell. Within the host nucleus, NEC1 interacts with the newly formed capsid through the vertexes and directs it to the inner nuclear membrane by associating with NEC2. Induces the budding of the capsid at the inner nuclear membrane as well as its envelopment into the perinuclear space. There, the NEC1/NEC2 complex promotes the fusion of the enveloped capsid with the outer nuclear membrane and the subsequent release of the viral capsid into the cytoplasm where it will reach the secondary budding sites in the host Golgi or trans-Golgi network. The protein is Nuclear egress protein 1 of Homo sapiens (Human).